The sequence spans 382 residues: Galactokinase (382 aa).

Residue 34 to 37 participates in substrate binding; the sequence is EHTD. 124 to 130 serves as a coordination point for ATP; it reads GAGLSSS. Ser130 and Glu162 together coordinate Mg(2+). Catalysis depends on Asp174, which acts as the Proton acceptor. A substrate-binding site is contributed by Tyr223.

This sequence belongs to the GHMP kinase family. GalK subfamily.

The protein resides in the cytoplasm. It carries out the reaction alpha-D-galactose + ATP = alpha-D-galactose 1-phosphate + ADP + H(+). It functions in the pathway carbohydrate metabolism; galactose metabolism. Its function is as follows. Catalyzes the transfer of the gamma-phosphate of ATP to D-galactose to form alpha-D-galactose-1-phosphate (Gal-1-P). The chain is Galactokinase from Citrobacter koseri (strain ATCC BAA-895 / CDC 4225-83 / SGSC4696).